A 135-amino-acid chain; its full sequence is Interleukin-4 (135 aa).

A signal peptide spans 1-24 (MGLTYQLIPVLVCLLVCTSHFVHG). 3 disulfides stabilise this stretch: C27–C135, C48–C85, and C70–C105. Residue N62 is glycosylated (N-linked (GlcNAc...) asparagine).

This sequence belongs to the IL-4/IL-13 family.

Its subcellular location is the secreted. Participates in at least several B-cell activation processes as well as of other cell types. It is a costimulator of DNA-synthesis. It induces the expression of class II MHC molecules on resting B-cells. It enhances both secretion and cell surface expression of IgE and IgG1. It also regulates the expression of the low affinity Fc receptor for IgE (CD23) on both lymphocytes and monocytes. Positively regulates IL31RA expression in macrophages. Stimulates autophagy in dendritic cells by interfering with mTORC1 signaling and through the induction of RUFY4. The polypeptide is Interleukin-4 (IL4) (Bubalus carabanensis (Swamp type water buffalo)).